A 213-amino-acid polypeptide reads, in one-letter code: Thymidylate kinase (213 aa).

Position 11–18 (11–18) interacts with ATP; the sequence is GPEGAGKT.

This sequence belongs to the thymidylate kinase family.

It catalyses the reaction dTMP + ATP = dTDP + ADP. Phosphorylation of dTMP to form dTDP in both de novo and salvage pathways of dTTP synthesis. This is Thymidylate kinase from Leuconostoc mesenteroides subsp. mesenteroides (strain ATCC 8293 / DSM 20343 / BCRC 11652 / CCM 1803 / JCM 6124 / NCDO 523 / NBRC 100496 / NCIMB 8023 / NCTC 12954 / NRRL B-1118 / 37Y).